The following is a 494-amino-acid chain: Aspartyl/glutamyl-tRNA(Asn/Gln) amidotransferase subunit B (494 aa).

The protein belongs to the GatB/GatE family. GatB subfamily. Heterotrimer of A, B and C subunits.

The catalysed reaction is L-glutamyl-tRNA(Gln) + L-glutamine + ATP + H2O = L-glutaminyl-tRNA(Gln) + L-glutamate + ADP + phosphate + H(+). It carries out the reaction L-aspartyl-tRNA(Asn) + L-glutamine + ATP + H2O = L-asparaginyl-tRNA(Asn) + L-glutamate + ADP + phosphate + 2 H(+). Allows the formation of correctly charged Asn-tRNA(Asn) or Gln-tRNA(Gln) through the transamidation of misacylated Asp-tRNA(Asn) or Glu-tRNA(Gln) in organisms which lack either or both of asparaginyl-tRNA or glutaminyl-tRNA synthetases. The reaction takes place in the presence of glutamine and ATP through an activated phospho-Asp-tRNA(Asn) or phospho-Glu-tRNA(Gln). This chain is Aspartyl/glutamyl-tRNA(Asn/Gln) amidotransferase subunit B, found in Rhodopseudomonas palustris (strain BisA53).